A 188-amino-acid chain; its full sequence is Elongation factor P (188 aa).

Belongs to the elongation factor P family.

It is found in the cytoplasm. It functions in the pathway protein biosynthesis; polypeptide chain elongation. Functionally, involved in peptide bond synthesis. Stimulates efficient translation and peptide-bond synthesis on native or reconstituted 70S ribosomes in vitro. Probably functions indirectly by altering the affinity of the ribosome for aminoacyl-tRNA, thus increasing their reactivity as acceptors for peptidyl transferase. This is Elongation factor P from Bifidobacterium longum (strain DJO10A).